The chain runs to 436 residues: Serine--tRNA ligase (436 aa).

Residue 239-241 (TAE) participates in L-serine binding. Residue 270–272 (RLE) coordinates ATP. L-serine is bound at residue E293. 357–360 (EISS) lines the ATP pocket. S393 serves as a coordination point for L-serine.

Belongs to the class-II aminoacyl-tRNA synthetase family. Type-1 seryl-tRNA synthetase subfamily. Homodimer. The tRNA molecule binds across the dimer.

It is found in the cytoplasm. It catalyses the reaction tRNA(Ser) + L-serine + ATP = L-seryl-tRNA(Ser) + AMP + diphosphate + H(+). The catalysed reaction is tRNA(Sec) + L-serine + ATP = L-seryl-tRNA(Sec) + AMP + diphosphate + H(+). It participates in aminoacyl-tRNA biosynthesis; selenocysteinyl-tRNA(Sec) biosynthesis; L-seryl-tRNA(Sec) from L-serine and tRNA(Sec): step 1/1. Catalyzes the attachment of serine to tRNA(Ser). Is also able to aminoacylate tRNA(Sec) with serine, to form the misacylated tRNA L-seryl-tRNA(Sec), which will be further converted into selenocysteinyl-tRNA(Sec). In Blochmanniella floridana, this protein is Serine--tRNA ligase.